We begin with the raw amino-acid sequence, 465 residues long: uncharacterized protein (465 aa).

Residues 87–112 (KTSQQIDSSPPQTPTTSNGSMMTRRQ) show a composition bias toward polar residues. 2 disordered regions span residues 87-169 (KTSQ…SYDD) and 201-244 (EGYI…NNIF). Residues 113-139 (NANNAISSNNNTNTNVTNGSSSNTSLN) show a composition bias toward low complexity. A compositionally biased stretch (acidic residues) spans 141–157 (GDEEQEEEEEEENDEDS). The span at 217–244 (NRNNNNNNINKNNNNNINNNNNNNNNIF) shows a compositional bias: low complexity.

This is an uncharacterized protein from Dictyostelium discoideum (Social amoeba).